The chain runs to 141 residues: Putative pre-16S rRNA nuclease (141 aa).

This sequence belongs to the YqgF nuclease family.

It is found in the cytoplasm. Its function is as follows. Could be a nuclease involved in processing of the 5'-end of pre-16S rRNA. This is Putative pre-16S rRNA nuclease from Chlorobium luteolum (strain DSM 273 / BCRC 81028 / 2530) (Pelodictyon luteolum).